Here is a 1279-residue protein sequence, read N- to C-terminus: ATP-dependent helicase/nuclease subunit A (1279 aa).

The UvrD-like helicase ATP-binding domain occupies 4 to 499 (TKWTDEQRQA…VKLFKNFRSR (496 aa)). 25-32 (AGAGAGKT) serves as a coordination point for ATP. Residues 526–853 (EEALKVGASY…RIMSIHKSKG (328 aa)) form the UvrD-like helicase C-terminal domain.

It belongs to the helicase family. AddA subfamily. Heterodimer of AddA and AddB/RexB. Requires Mg(2+) as cofactor.

It catalyses the reaction Couples ATP hydrolysis with the unwinding of duplex DNA by translocating in the 3'-5' direction.. The enzyme catalyses ATP + H2O = ADP + phosphate + H(+). The heterodimer acts as both an ATP-dependent DNA helicase and an ATP-dependent, dual-direction single-stranded exonuclease. Recognizes the chi site generating a DNA molecule suitable for the initiation of homologous recombination. The AddA nuclease domain is required for chi fragment generation; this subunit has the helicase and 3' -&gt; 5' nuclease activities. The protein is ATP-dependent helicase/nuclease subunit A of Clostridium botulinum (strain Loch Maree / Type A3).